Reading from the N-terminus, the 494-residue chain is Trigger factor (494 aa).

In terms of domain architecture, PPIase FKBP-type spans 169–254 (GDRITMDYVG…VKDVAAPGAV (86 aa)). The tract at residues 440-494 (LLAEDEGEAKAETKKAAPKKKAAAKSEAAEAGEGEEAAPKKKAAPKKKASEDSAE) is disordered.

It belongs to the FKBP-type PPIase family. Tig subfamily.

Its subcellular location is the cytoplasm. It carries out the reaction [protein]-peptidylproline (omega=180) = [protein]-peptidylproline (omega=0). Involved in protein export. Acts as a chaperone by maintaining the newly synthesized protein in an open conformation. Functions as a peptidyl-prolyl cis-trans isomerase. The polypeptide is Trigger factor (Rhizobium etli (strain ATCC 51251 / DSM 11541 / JCM 21823 / NBRC 15573 / CFN 42)).